The chain runs to 68 residues: Protein VNG_1110C (68 aa).

The chain is Protein VNG_1110C from Halobacterium salinarum (strain ATCC 700922 / JCM 11081 / NRC-1) (Halobacterium halobium).